The chain runs to 802 residues: Ras GTPase-activating protein 4 (802 aa).

C2 domains follow at residues 1–105 (MAKR…SGWT) and 116–232 (VQGE…EGWF). Positions 21, 27, 74, 76, 79, 82, 149, 155, 202, 204, 207, and 210 each coordinate Ca(2+). The Ras-GAP domain occupies 317–545 (GLAKDFLDLL…AQLKDFIMKL (229 aa)). Residues 565-672 (PPVKEGPLFI…WLSALRKAST (108 aa)) form the PH domain. The Btk-type zinc-finger motif lies at 674–710 (NRGLLRSYHPGIFRGDKWSCCHQKDKTDQGCDKTHSR). Positions 682, 693, 694, and 704 each coordinate Zn(2+).

Ca(2+) is required as a cofactor. As to expression, isoform 2 is expressed in osteoblasts.

It is found in the cytoplasm. The protein localises to the cytosol. It localises to the cell membrane. In terms of biological role, ca(2+)-dependent Ras GTPase-activating protein, that switches off the Ras-MAPK pathway following a stimulus that elevates intracellular calcium. Functions as an adaptor for Cdc42 and Rac1 during FcR-mediated phagocytosis. Isoform 2 activates the Ras pathway and promotes RANKL shedding by modulating the expression of MMP14. The sequence is that of Ras GTPase-activating protein 4 (Rasa4) from Mus musculus (Mouse).